Reading from the N-terminus, the 259-residue chain is Activator of lactoyl-CoA dehydratase (259 aa).

Residues C125 and C164 each contribute to the [4Fe-4S] cluster site.

As to quaternary structure, homodimer. The cofactor is [4Fe-4S] cluster.

Its function is as follows. Required for the activation of lactoyl-CoA dehydratase. This protein is extremely sensitive towards oxygen. The sequence is that of Activator of lactoyl-CoA dehydratase (lcdC) from Anaerotignum propionicum (Clostridium propionicum).